Consider the following 144-residue polypeptide: Large ribosomal subunit protein uL15 (144 aa).

Residues 1-52 (MRLNTISSAPGAKQAEKRVGRGIGSGWGKTCGRGHKGQKSRSGGFHKVGFEG) are disordered. Gly residues predominate over residues 21–31 (RGIGSGWGKTC).

This sequence belongs to the universal ribosomal protein uL15 family. Part of the 50S ribosomal subunit.

Binds to the 23S rRNA. In Nitrosococcus oceani (strain ATCC 19707 / BCRC 17464 / JCM 30415 / NCIMB 11848 / C-107), this protein is Large ribosomal subunit protein uL15.